Reading from the N-terminus, the 274-residue chain is 4-deoxy-L-threo-5-hexosulose-uronate ketol-isomerase (274 aa).

Zn(2+)-binding residues include H192, H194, E199, and H241.

This sequence belongs to the KduI family. Zn(2+) is required as a cofactor.

The catalysed reaction is 5-dehydro-4-deoxy-D-glucuronate = 3-deoxy-D-glycero-2,5-hexodiulosonate. Its pathway is glycan metabolism; pectin degradation; 2-dehydro-3-deoxy-D-gluconate from pectin: step 4/5. Functionally, catalyzes the isomerization of 5-dehydro-4-deoxy-D-glucuronate to 3-deoxy-D-glycero-2,5-hexodiulosonate. This chain is 4-deoxy-L-threo-5-hexosulose-uronate ketol-isomerase, found in Agrobacterium fabrum (strain C58 / ATCC 33970) (Agrobacterium tumefaciens (strain C58)).